A 178-amino-acid chain; its full sequence is Large ribosomal subunit protein bL25 (178 aa).

This sequence belongs to the bacterial ribosomal protein bL25 family. CTC subfamily. As to quaternary structure, part of the 50S ribosomal subunit; part of the 5S rRNA/L5/L18/L25 subcomplex. Contacts the 5S rRNA. Binds to the 5S rRNA independently of L5 and L18.

This is one of the proteins that binds to the 5S RNA in the ribosome where it forms part of the central protuberance. The protein is Large ribosomal subunit protein bL25 of Helicobacter pylori (strain ATCC 700392 / 26695) (Campylobacter pylori).